Here is a 567-residue protein sequence, read N- to C-terminus: Delta(24)-sterol reductase (567 aa).

Topologically, residues 1 to 24 are lumenal; that stretch reads MSDLEAPLRPKRKKIWVDYFVKFR. A helical; Signal-anchor membrane pass occupies residues 25 to 45; that stretch reads WILVIFVVLPISFTLYFLTYL. One can recognise an FAD-binding PCMH-type domain in the interval 45–231; sequence LGDVRSEWKS…VAAEVKLIPI (187 aa). Over 46 to 567 the chain is Cytoplasmic; it reads GDVRSEWKSF…AYPEVDQPPD (522 aa). The interval 520–541 is interaction with calmodulin; the sequence is CRRKYGAVGTFMSVYYKCKKGR. Residues 548 to 567 form a disordered region; that stretch reads REAEQAHLDTAYPEVDQPPD.

It belongs to the DIMINUTO family. In terms of tissue distribution, highly expressed in the apical region and root tips and lower levels in immature and mature internodes and leaves.

The protein localises to the membrane. The enzyme catalyses lathosterol + NADP(+) = 5alpha-cholesta-7,24-dien-3beta-ol + NADPH + H(+). In terms of biological role, plays a critical role in the general process of plant cell elongation. The chain is Delta(24)-sterol reductase (DIM) from Pisum sativum (Garden pea).